The sequence spans 164 residues: Thiol peroxidase (164 aa).

The 147-residue stretch at 18–164 (KKVGDSAPDF…YEAVLSHLNK (147 aa)) folds into the Thioredoxin domain. The active-site Cysteine sulfenic acid (-SOH) intermediate is Cys60. Residues Cys60 and Cys94 are joined by a disulfide bond.

The protein belongs to the peroxiredoxin family. Tpx subfamily. Homodimer.

The enzyme catalyses a hydroperoxide + [thioredoxin]-dithiol = an alcohol + [thioredoxin]-disulfide + H2O. Its function is as follows. Thiol-specific peroxidase that catalyzes the reduction of hydrogen peroxide and organic hydroperoxides to water and alcohols, respectively. Plays a role in cell protection against oxidative stress by detoxifying peroxides. This chain is Thiol peroxidase, found in Oceanobacillus iheyensis (strain DSM 14371 / CIP 107618 / JCM 11309 / KCTC 3954 / HTE831).